The sequence spans 862 residues: Aldehyde-alcohol dehydrogenase (862 aa).

The active site involves C244. Position 420–425 (420–425 (GFWGGN)) interacts with NAD(+).

In the N-terminal section; belongs to the aldehyde dehydrogenase family. This sequence in the C-terminal section; belongs to the iron-containing alcohol dehydrogenase family.

It carries out the reaction a primary alcohol + NAD(+) = an aldehyde + NADH + H(+). The enzyme catalyses a secondary alcohol + NAD(+) = a ketone + NADH + H(+). The catalysed reaction is an aldehyde + NAD(+) + H2O = a carboxylate + NADH + 2 H(+). Has both aldehyde and alcohol dehydrogenase activities. Can use acetaldehyde, butyraldehyde, butanol and ethanol. This Clostridium acetobutylicum (strain ATCC 824 / DSM 792 / JCM 1419 / IAM 19013 / LMG 5710 / NBRC 13948 / NRRL B-527 / VKM B-1787 / 2291 / W) protein is Aldehyde-alcohol dehydrogenase.